Reading from the N-terminus, the 149-residue chain is UPF0310 protein SSO2595 (149 aa).

Belongs to the UPF0310 family.

The polypeptide is UPF0310 protein SSO2595 (Saccharolobus solfataricus (strain ATCC 35092 / DSM 1617 / JCM 11322 / P2) (Sulfolobus solfataricus)).